The primary structure comprises 269 residues: Formamidopyrimidine-DNA glycosylase (269 aa).

Residue Pro2 is the Schiff-base intermediate with DNA of the active site. The active-site Proton donor is the Glu3. Lys57 acts as the Proton donor; for beta-elimination activity in catalysis. DNA contacts are provided by His90, Arg109, and Lys150. Residues 235 to 269 form an FPG-type zinc finger; the sequence is QVYGRKGEPCRVCGTPIVATKHAQRATFYCRHCQK. The active-site Proton donor; for delta-elimination activity is Arg259.

Belongs to the FPG family. In terms of assembly, monomer. Requires Zn(2+) as cofactor.

It carries out the reaction Hydrolysis of DNA containing ring-opened 7-methylguanine residues, releasing 2,6-diamino-4-hydroxy-5-(N-methyl)formamidopyrimidine.. The enzyme catalyses 2'-deoxyribonucleotide-(2'-deoxyribose 5'-phosphate)-2'-deoxyribonucleotide-DNA = a 3'-end 2'-deoxyribonucleotide-(2,3-dehydro-2,3-deoxyribose 5'-phosphate)-DNA + a 5'-end 5'-phospho-2'-deoxyribonucleoside-DNA + H(+). In terms of biological role, involved in base excision repair of DNA damaged by oxidation or by mutagenic agents. Acts as a DNA glycosylase that recognizes and removes damaged bases. Has a preference for oxidized purines, such as 7,8-dihydro-8-oxoguanine (8-oxoG). Has AP (apurinic/apyrimidinic) lyase activity and introduces nicks in the DNA strand. Cleaves the DNA backbone by beta-delta elimination to generate a single-strand break at the site of the removed base with both 3'- and 5'-phosphates. The polypeptide is Formamidopyrimidine-DNA glycosylase (Salmonella heidelberg (strain SL476)).